Here is a 98-residue protein sequence, read N- to C-terminus: Aspartyl/glutamyl-tRNA(Asn/Gln) amidotransferase subunit C (98 aa).

It belongs to the GatC family. Heterotrimer of A, B and C subunits.

It catalyses the reaction L-glutamyl-tRNA(Gln) + L-glutamine + ATP + H2O = L-glutaminyl-tRNA(Gln) + L-glutamate + ADP + phosphate + H(+). The catalysed reaction is L-aspartyl-tRNA(Asn) + L-glutamine + ATP + H2O = L-asparaginyl-tRNA(Asn) + L-glutamate + ADP + phosphate + 2 H(+). Its function is as follows. Allows the formation of correctly charged Asn-tRNA(Asn) or Gln-tRNA(Gln) through the transamidation of misacylated Asp-tRNA(Asn) or Glu-tRNA(Gln) in organisms which lack either or both of asparaginyl-tRNA or glutaminyl-tRNA synthetases. The reaction takes place in the presence of glutamine and ATP through an activated phospho-Asp-tRNA(Asn) or phospho-Glu-tRNA(Gln). The polypeptide is Aspartyl/glutamyl-tRNA(Asn/Gln) amidotransferase subunit C (Roseiflexus castenholzii (strain DSM 13941 / HLO8)).